Consider the following 348-residue polypeptide: Spore wall and anchoring disk complex protein EnP1 (348 aa).

The N-terminal stretch at 1-16 (MKLLGLLISAFGAINA) is a signal peptide. N-linked (GlcNAc...) asparagine glycans are attached at residues asparagine 47, asparagine 139, and asparagine 140. The HBM1 motif lies at 193–198 (PRHGRS). The short motif at 248–256 (IRKGKDKKC) is the HBM2 element. Positions 322–327 (LKKIRG) match the HBM3 motif.

The protein resides in the spore wall. It is found in the spore. It localises to the perispore. Its function is as follows. Spore wall protein involved in the adhesion to host cells surface glycoaminoglycans (GAGs). Microsporidian spore adherence is an integral part of activation and host cell infection. This chain is Spore wall and anchoring disk complex protein EnP1 (EnP1), found in Encephalitozoon intestinalis (Microsporidian parasite).